Here is a 508-residue protein sequence, read N- to C-terminus: Photosystem II CP47 reaction center protein (508 aa).

6 helical membrane passes run 21–36 (AVHLMHTSLVSGWAGS), 101–115 (IVLSGLLFAASIWHW), 140–156 (GIHLFLSGVLCFGFGAF), 203–218 (IAAGILGVLAGLFHLC), 237–252 (VLSSSIAAVFWAAFVV), and 457–472 (CFALLFFFGHIWHGAR).

It belongs to the PsbB/PsbC family. PsbB subfamily. PSII is composed of 1 copy each of membrane proteins PsbA, PsbB, PsbC, PsbD, PsbE, PsbF, PsbH, PsbI, PsbJ, PsbK, PsbL, PsbM, PsbT, PsbX, PsbY, PsbZ, Psb30/Ycf12, at least 3 peripheral proteins of the oxygen-evolving complex and a large number of cofactors. It forms dimeric complexes. Requires Binds multiple chlorophylls. PSII binds additional chlorophylls, carotenoids and specific lipids. as cofactor.

The protein resides in the plastid. It is found in the chloroplast thylakoid membrane. Functionally, one of the components of the core complex of photosystem II (PSII). It binds chlorophyll and helps catalyze the primary light-induced photochemical processes of PSII. PSII is a light-driven water:plastoquinone oxidoreductase, using light energy to abstract electrons from H(2)O, generating O(2) and a proton gradient subsequently used for ATP formation. This is Photosystem II CP47 reaction center protein from Chlorella vulgaris (Green alga).